The chain runs to 213 residues: Thymidylate kinase (213 aa).

An ATP-binding site is contributed by 10 to 17 (GLEGAGKT).

Belongs to the thymidylate kinase family.

The catalysed reaction is dTMP + ATP = dTDP + ADP. In terms of biological role, phosphorylation of dTMP to form dTDP in both de novo and salvage pathways of dTTP synthesis. The protein is Thymidylate kinase of Salmonella arizonae (strain ATCC BAA-731 / CDC346-86 / RSK2980).